The following is an 87-amino-acid chain: Translation initiation factor IF-1 2 (87 aa).

The S1-like domain maps to 1–72; that stretch reads MAKEELLEMQ…SKGRITFRHI (72 aa).

It belongs to the IF-1 family. Component of the 30S ribosomal translation pre-initiation complex which assembles on the 30S ribosome in the order IF-2 and IF-3, IF-1 and N-formylmethionyl-tRNA(fMet); mRNA recruitment can occur at any time during PIC assembly.

Its subcellular location is the cytoplasm. Its function is as follows. One of the essential components for the initiation of protein synthesis. Stabilizes the binding of IF-2 and IF-3 on the 30S subunit to which N-formylmethionyl-tRNA(fMet) subsequently binds. Helps modulate mRNA selection, yielding the 30S pre-initiation complex (PIC). Upon addition of the 50S ribosomal subunit IF-1, IF-2 and IF-3 are released leaving the mature 70S translation initiation complex. The chain is Translation initiation factor IF-1 2 from Dechloromonas aromatica (strain RCB).